The primary structure comprises 369 residues: Putative F-box protein At1g70960 (369 aa).

Residues 3 to 54 enclose the F-box domain; sequence NTSFETLPRHMQMEILSRVPLKFLMKFMCVSKKWASIIRGEEFREDYLFQSM.

In Arabidopsis thaliana (Mouse-ear cress), this protein is Putative F-box protein At1g70960.